The chain runs to 523 residues: Solute carrier family 35 member F5 (523 aa).

A run of 2 helical transmembrane segments spans residues Met69–Leu89 and Phe101–Trp121. Ser207 carries the post-translational modification Phosphoserine. A run of 8 helical transmembrane segments spans residues Ile243–Ser263, Ala268–Phe288, Phe296–Leu316, Thr327–Ile347, Met361–Leu381, Val395–Trp415, Phe420–Ile440, and Trp452–Cys472. The EamA domain maps to Phe252–Leu316.

It belongs to the SLC35F solute transporter family.

It localises to the membrane. Putative solute transporter. This chain is Solute carrier family 35 member F5 (SLC35F5), found in Pongo abelii (Sumatran orangutan).